A 548-amino-acid chain; its full sequence is MPHDRKNSSRRAWAALCAAVLAVSGALVGVAAPASAVPATIPLTITNDSGRGPIYLYVLGERDGVAGWADAGGTFHPWPGGVGPVPVPAPDASIAGPGPGQSVTIRLPKLSGRVYYSYGQKMTFQIVLDGRLVQPAVQNDSDPNRNILFNWTEYTLNDGGLWINSTQVDHWSAPYQVGVQRADGQVLSTGMLKPNGYEAFYTALESAGWGGLVQRAPDGSRLRALNPSHGIDVGKISSASIDSYVTEVWNSYRTRDMCVTPFSHEPGTQFRGRVDGDWFRFRNGSGQEVAAFKKPDASSVYGCHKDLQAPNDHVVGPIARTLCAALVRTTALTNPNQPDANSAGFYQDARTNVYAKLAHQQMANGKAYAFAFDDVGAHESLVHDGNPQAAYIKLDPFTGTATPIANGGSTEQPGTPGGLPAGTGALRIGSTLCLDVPWADPTDTNQVQLATCSGNAAQQWTRGTDGTVRALGKCLDVARSGTADGTAVWIYTCNGTGAQKWTYDSATKALRNPQSGKCLDAQGGAPLRDGQKVQLWTCNQTEAQRWTL.

The segment at residues 1-36 is a signal peptide (tat-type signal); that stretch reads MPHDRKNSSRRAWAALCAAVLAVSGALVGVAAPASA. The GH64 domain maps to 38-396; the sequence is PATIPLTITN…PQAAYIKLDP (359 aa). Residue Glu153 is the Proton donor of the active site. The Proton acceptor role is filled by Asp169. Residues 422 to 548 form the Ricin B-type lectin domain; the sequence is GTGALRIGST…NQTEAQRWTL (127 aa).

The protein belongs to the glycosyl hydrolase 64 family. In terms of processing, predicted to be exported by the Tat system. The position of the signal peptide cleavage has not been experimentally proven.

It localises to the periplasm. The catalysed reaction is Hydrolysis of (1-&gt;3)-beta-D-glucosidic linkages in (1-&gt;3)-beta-D-glucans.. Its function is as follows. Lysis of cellular walls containing beta-1,3-glucans. Implicated in the defense against fungal pathogens. The polypeptide is Glucan endo-1,3-beta-glucosidase (glcI) (Arthrobacter sp. (strain YCWD3)).